Reading from the N-terminus, the 572-residue chain is NADH-ubiquinone oxidoreductase chain 5 (572 aa).

Helical transmembrane passes span 6–26 (FFFL…YLMI), 44–64 (VVMT…VMYI), 86–106 (IMIV…PNLI), 107–127 (SILL…IYYQ), 147–167 (VAIL…YIYY), 179–201 (IITL…SSWL), 208–230 (PTPV…LLIR), 234–254 (MLMV…TMFM), 268–288 (IIAL…SMGY), 291–311 (LAFF…MCAG), 337–357 (SICF…AGFY), 372–394 (NFFI…FRLF), 422–442 (IGLL…IFPV), 454–474 (FLTL…SDFV), 479–499 (LFSL…FMPF), 524–544 (WGEL…INYI), and 552–572 (FKVY…LFFL).

This sequence belongs to the complex I subunit 5 family.

The protein localises to the mitochondrion inner membrane. The enzyme catalyses a ubiquinone + NADH + 5 H(+)(in) = a ubiquinol + NAD(+) + 4 H(+)(out). Functionally, core subunit of the mitochondrial membrane respiratory chain NADH dehydrogenase (Complex I) that is believed to belong to the minimal assembly required for catalysis. Complex I functions in the transfer of electrons from NADH to the respiratory chain. The immediate electron acceptor for the enzyme is believed to be ubiquinone. The polypeptide is NADH-ubiquinone oxidoreductase chain 5 (ND5) (Locusta migratoria (Migratory locust)).